A 380-amino-acid chain; its full sequence is MAETDQPGKIFIGGLNIKTRQKTLQEIFGRFGPVARVILMRDRETKKSRGFAFLTFRRPADAKNAVKEMNGVILDGKRIKVKQARRPSSLESGSKKRPPSFSRTRGASRILKCGRGGRSRARSGPSCEGNLGGDRYTPNFNVSSSGRHFAVKRNPSSKRDGPPSKRSATSAQTRSNTGLRGREPHRREISRNMPRGEPASSRRDEYPLPRDYGQSSNDRKYESTSRGYCDYGNYHSREESASKVFSDHAGYLGGRDRDFSEYLSGNSYRDTYRSYGRFHEAPSARGGNNRYDDYSNSQDGYGGRGEPYISNRSNIYSSDYERSGRQEVLPPPIDREYFDREGRQERGHSPKDGLYSASRESYSSNTKIWGIPWRSWRKQI.

The 79-residue stretch at 8-86 (GKIFIGGLNI…KRIKVKQARR (79 aa)) folds into the RRM domain. Disordered regions lie at residues 82–226 (KQAR…STSR) and 279–358 (HEAP…YSAS). Residues 166-178 (RSATSAQTRSNTG) are compositionally biased toward polar residues. Basic and acidic residues-rich tracts occupy residues 180 to 190 (RGREPHRREIS) and 333 to 351 (IDRE…HSPK).

Testis-specific.

The protein resides in the nucleus. In terms of biological role, RNA-binding protein which may be involved in spermatogenesis. May be required for sperm development, possibly by participating in pre-mRNA splicing in the testis. The chain is RNA-binding motif protein, Y chromosome, family 9 from Mus musculus (Mouse).